The sequence spans 169 residues: Protein pid-1 (169 aa).

A compositionally biased stretch (polar residues) spans 137 to 151 (SGSPRITPQKHTPVS). The segment at 137-169 (SGSPRITPQKHTPVSANHKPARSIFDDIPSNIA) is disordered.

As to quaternary structure, component of the pid-1 variant of the PETISCO complex (also called the pid-3, erh-2, tofu-6, and ife-3 small RNA complex) containing at least pid-1, tofu-6, ife-3, pid-3, and erh-2, which is required for the biogenesis of a class of 21 nucleotide PIWI-interacting RNAs (piRNAs) that possess a uracil residue at the 5'-end (also called 21U-RNAs). Within the complex interacts with pid-3; the interaction is direct. Within the complex interacts with erh-2. Within the complex interacts with tofu-6. Expressed predominantly in the germline (at protein level).

The protein localises to the cytoplasm. It is found in the nucleus. It localises to the perinuclear region. Functionally, component of the pid-1 variant of the PETISCO complex which is required for the biogenesis of a class of 21 nucleotide PIWI-interacting RNAs (piRNAs) that possess a uracil residue at the 5'-end (also called 21U-RNAs). Within the complex acts as an adapter which binds to the complex via erh-2. Involved in the biogenesis of 21U-RNAs which guide the piwi protein prg-1 to its DNA targets for silencing. Plays a role in small RNA-directed transgenerational epigenetic inheritance. This is Protein pid-1 from Caenorhabditis elegans.